The following is a 281-amino-acid chain: Peptidyl-prolyl cis-trans isomerase CYP28, chloroplastic (281 aa).

The N-terminal 24 residues, Met-1–Ala-24, are a transit peptide targeting the chloroplast. The 203-residue stretch at Ser-66–Glu-268 folds into the PPIase cyclophilin-type domain.

Belongs to the cyclophilin-type PPIase family. In terms of processing, S-nytrosylated during the hypersensitive disease resistance response. Ubiquitous. Not detected in roots.

The protein localises to the plastid. It is found in the chloroplast. The enzyme catalyses [protein]-peptidylproline (omega=180) = [protein]-peptidylproline (omega=0). In terms of biological role, PPIases accelerate the folding of proteins. It catalyzes the cis-trans isomerization of proline imidic peptide bonds in oligopeptides. This is Peptidyl-prolyl cis-trans isomerase CYP28, chloroplastic (CYP28) from Arabidopsis thaliana (Mouse-ear cress).